Here is a 445-residue protein sequence, read N- to C-terminus: Ribosomal protein uS12 methylthiotransferase RimO (445 aa).

The 111-residue stretch at 10 to 120 (PKVGFVSLGC…VVNAVHEVVP (111 aa)) folds into the MTTase N-terminal domain. [4Fe-4S] cluster contacts are provided by cysteine 19, cysteine 55, cysteine 84, cysteine 153, cysteine 157, and cysteine 160. The Radical SAM core domain occupies 139–378 (LTPRHYAYLK…AHQQEISSAR (240 aa)). Residues 380–445 (QQRIGKEIEV…DEYDLWAETL (66 aa)) enclose the TRAM domain.

This sequence belongs to the methylthiotransferase family. RimO subfamily. [4Fe-4S] cluster serves as cofactor.

The protein resides in the cytoplasm. The enzyme catalyses L-aspartate(89)-[ribosomal protein uS12]-hydrogen + (sulfur carrier)-SH + AH2 + 2 S-adenosyl-L-methionine = 3-methylsulfanyl-L-aspartate(89)-[ribosomal protein uS12]-hydrogen + (sulfur carrier)-H + 5'-deoxyadenosine + L-methionine + A + S-adenosyl-L-homocysteine + 2 H(+). Catalyzes the methylthiolation of an aspartic acid residue of ribosomal protein uS12. The protein is Ribosomal protein uS12 methylthiotransferase RimO of Pseudomonas fluorescens (strain ATCC BAA-477 / NRRL B-23932 / Pf-5).